The sequence spans 315 residues: HTH-type transcriptional regulator TreR (315 aa).

The HTH lacI-type domain maps to 5–59 (LTIKDIARLSGVGKSTVSRVLNNESGVSQLTRERVEAVMNQHGFSPSRSARAMRG). The H-T-H motif DNA-binding region spans 7-26 (IKDIARLSGVGKSTVSRVLN). Residues 71–77 (RLDSLSE), Gly-126, Arg-147, 187–190 (DVTT), Arg-194, Thr-242, and Tyr-284 each bind alpha,alpha-trehalose 6-phosphate.

As to quaternary structure, homodimer.

Functionally, repressor of the treBC operon. It is able to bind trehalose-6-phosphate and trehalose. The polypeptide is HTH-type transcriptional regulator TreR (treR) (Escherichia coli (strain K12)).